The chain runs to 181 residues: Putative manganese efflux pump MntP (181 aa).

5 helical membrane passes run isoleucine 35 to alanine 55, valine 59 to isoleucine 79, alanine 102 to isoleucine 122, isoleucine 126 to methionine 146, and isoleucine 161 to methionine 181.

This sequence belongs to the MntP (TC 9.B.29) family.

Its subcellular location is the cell inner membrane. In terms of biological role, probably functions as a manganese efflux pump. This Nitrosomonas eutropha (strain DSM 101675 / C91 / Nm57) protein is Putative manganese efflux pump MntP.